A 232-amino-acid polypeptide reads, in one-letter code: LexA repressor (232 aa).

Positions 36 to 56 (IREIGDAAGLQSTSSVAYQLK) form a DNA-binding region, H-T-H motif. The segment covering 62 to 86 (GFLRRDPNKPRAVDVRHLPETDNRT) has biased composition (basic and acidic residues). The tract at residues 62–107 (GFLRRDPNKPRAVDVRHLPETDNRTKAGPKAKARPTAGASPQPELA) is disordered. Catalysis depends on for autocatalytic cleavage activity residues Ser156 and Lys193.

It belongs to the peptidase S24 family. Homodimer.

It catalyses the reaction Hydrolysis of Ala-|-Gly bond in repressor LexA.. Its function is as follows. Represses a number of genes involved in the response to DNA damage (SOS response), including recA and lexA. In the presence of single-stranded DNA, RecA interacts with LexA causing an autocatalytic cleavage which disrupts the DNA-binding part of LexA, leading to derepression of the SOS regulon and eventually DNA repair. The chain is LexA repressor from Corynebacterium efficiens (strain DSM 44549 / YS-314 / AJ 12310 / JCM 11189 / NBRC 100395).